Reading from the N-terminus, the 308-residue chain is Protein translocase subunit SecF (308 aa).

Helical transmembrane passes span 22-42 (AVSYSFSIILSLISFIWIGIY), 140-160 (IEAGAMAMLSSFLAIMVYIWV), 164-184 (WYFGLGILIALVHDVILALGF), 194-214 (LSTIAAVLTIIGYSVNDSVVI), 246-266 (ILTVITTLLANLALMLFGGEA), and 272-292 (VLVFFGIIAGTYSSIFISAPI).

Belongs to the SecD/SecF family. SecF subfamily. Forms a complex with SecD. Part of the essential Sec protein translocation apparatus which comprises SecA, SecYEG and auxiliary proteins SecDF-YajC and YidC.

The protein localises to the cell inner membrane. Functionally, part of the Sec protein translocase complex. Interacts with the SecYEG preprotein conducting channel. SecDF uses the proton motive force (PMF) to complete protein translocation after the ATP-dependent function of SecA. The sequence is that of Protein translocase subunit SecF from Rickettsia akari (strain Hartford).